The primary structure comprises 345 residues: Phosphoribosylformylglycinamidine cyclo-ligase (345 aa).

The protein belongs to the AIR synthase family.

It is found in the cytoplasm. It catalyses the reaction 2-formamido-N(1)-(5-O-phospho-beta-D-ribosyl)acetamidine + ATP = 5-amino-1-(5-phospho-beta-D-ribosyl)imidazole + ADP + phosphate + H(+). It functions in the pathway purine metabolism; IMP biosynthesis via de novo pathway; 5-amino-1-(5-phospho-D-ribosyl)imidazole from N(2)-formyl-N(1)-(5-phospho-D-ribosyl)glycinamide: step 2/2. The protein is Phosphoribosylformylglycinamidine cyclo-ligase of Klebsiella pneumoniae (strain 342).